The following is a 209-amino-acid chain: Small ribosomal subunit protein uS4 (209 aa).

The region spanning 98-164 is the S4 RNA-binding domain; sequence RRLDNVVYRL…LPIKNAIELN (67 aa).

The protein belongs to the universal ribosomal protein uS4 family. Part of the 30S ribosomal subunit. Contacts protein S5. The interaction surface between S4 and S5 is involved in control of translational fidelity.

One of the primary rRNA binding proteins, it binds directly to 16S rRNA where it nucleates assembly of the body of the 30S subunit. Functionally, with S5 and S12 plays an important role in translational accuracy. In Thermosipho melanesiensis (strain DSM 12029 / CIP 104789 / BI429), this protein is Small ribosomal subunit protein uS4.